Reading from the N-terminus, the 408-residue chain is Aminopeptidase T (408 aa).

A divalent metal cation contacts are provided by E250, E316, E340, H345, H376, and D378.

Belongs to the peptidase M29 family. In terms of assembly, homodimer. Requires Co(2+) as cofactor. It depends on Zn(2+) as a cofactor. Mg(2+) is required as a cofactor.

Its function is as follows. Metal-dependent exopeptidase. In Thermus aquaticus, this protein is Aminopeptidase T.